The chain runs to 233 residues: Purine nucleoside phosphorylase DeoD-type (233 aa).

His-4 contributes to the a purine D-ribonucleoside binding site. Phosphate contacts are provided by residues Gly-20, Arg-24, Arg-43, and 87 to 90 (RIGT). A purine D-ribonucleoside contacts are provided by residues 179–181 (EME) and 203–204 (SD). Catalysis depends on Asp-204, which acts as the Proton donor.

It belongs to the PNP/UDP phosphorylase family. As to quaternary structure, homohexamer; trimer of homodimers.

It carries out the reaction a purine D-ribonucleoside + phosphate = a purine nucleobase + alpha-D-ribose 1-phosphate. The enzyme catalyses a purine 2'-deoxy-D-ribonucleoside + phosphate = a purine nucleobase + 2-deoxy-alpha-D-ribose 1-phosphate. Its function is as follows. Catalyzes the reversible phosphorolytic breakdown of the N-glycosidic bond in the beta-(deoxy)ribonucleoside molecules, with the formation of the corresponding free purine bases and pentose-1-phosphate. The chain is Purine nucleoside phosphorylase DeoD-type from Helicobacter pylori (strain P12).